We begin with the raw amino-acid sequence, 396 residues long: Acetyl-CoA acetyltransferase (396 aa).

Residue cysteine 88 is the Acyl-thioester intermediate of the active site. Catalysis depends on proton acceptor residues histidine 352 and cysteine 382.

The protein belongs to the thiolase-like superfamily. Thiolase family. In terms of assembly, homotetramer.

It catalyses the reaction 2 acetyl-CoA = acetoacetyl-CoA + CoA. It functions in the pathway biopolymer metabolism; poly-(R)-3-hydroxybutanoate biosynthesis. In terms of biological role, when expressed in E.coli with Synechocystis PhaB, PhaC and PhaE confers the ability to synthesize up to 12% (w/w) poly(3-hydroxybutyrate) (PHB) depending on the carbon source. The chain is Acetyl-CoA acetyltransferase from Synechocystis sp. (strain ATCC 27184 / PCC 6803 / Kazusa).